The chain runs to 78 residues: uncharacterized protein (78 aa).

This is an uncharacterized protein from Treponema pallidum (strain Nichols).